Reading from the N-terminus, the 172-residue chain is Crossover junction endodeoxyribonuclease RuvC (172 aa).

Active-site residues include D12, E71, and D143. Mg(2+)-binding residues include D12, E71, and D143.

Belongs to the RuvC family. Homodimer which binds Holliday junction (HJ) DNA. The HJ becomes 2-fold symmetrical on binding to RuvC with unstacked arms; it has a different conformation from HJ DNA in complex with RuvA. In the full resolvosome a probable DNA-RuvA(4)-RuvB(12)-RuvC(2) complex forms which resolves the HJ. It depends on Mg(2+) as a cofactor.

It is found in the cytoplasm. The catalysed reaction is Endonucleolytic cleavage at a junction such as a reciprocal single-stranded crossover between two homologous DNA duplexes (Holliday junction).. The RuvA-RuvB-RuvC complex processes Holliday junction (HJ) DNA during genetic recombination and DNA repair. Endonuclease that resolves HJ intermediates. Cleaves cruciform DNA by making single-stranded nicks across the HJ at symmetrical positions within the homologous arms, yielding a 5'-phosphate and a 3'-hydroxyl group; requires a central core of homology in the junction. The consensus cleavage sequence is 5'-(A/T)TT(C/G)-3'. Cleavage occurs on the 3'-side of the TT dinucleotide at the point of strand exchange. HJ branch migration catalyzed by RuvA-RuvB allows RuvC to scan DNA until it finds its consensus sequence, where it cleaves and resolves the cruciform DNA. In Coxiella burnetii (strain CbuG_Q212) (Coxiella burnetii (strain Q212)), this protein is Crossover junction endodeoxyribonuclease RuvC.